Here is a 77-residue protein sequence, read N- to C-terminus: Conotoxin Mr8.2 (77 aa).

Positions 1-16 are cleaved as a signal peptide; that stretch reads MLRLITAAVLVSACLA. The propeptide occupies 17–32; it reads YPQKKRTPPQTRPTSR.

This sequence belongs to the conotoxin B2 family. Contains 5 disulfide bonds. In terms of tissue distribution, expressed by the venom duct.

Its subcellular location is the secreted. This chain is Conotoxin Mr8.2, found in Conus marmoreus (Marble cone).